Here is a 490-residue protein sequence, read N- to C-terminus: Muscarinic acetylcholine receptor M4 (490 aa).

Residues 1 to 42 (MHNLSAQPWQAKMANLTYDNVTLSNRSEVAIQPPTNYKTVEL) lie on the Extracellular side of the membrane. 4 N-linked (GlcNAc...) asparagine glycosylation sites follow: asparagine 3, asparagine 15, asparagine 20, and asparagine 25. A helical membrane pass occupies residues 43 to 64 (VFIATVTGSLSLVTVVGNILVM). Over 65–78 (LSIKVNRQLQTVNN) the chain is Cytoplasmic. A helical membrane pass occupies residues 79-99 (YFLFSLACADLIIGVFSMNLY). The Extracellular segment spans residues 100 to 116 (TVYIIKGYWPLGAVVCD). A disulfide bridge links cysteine 115 with cysteine 195. The chain crosses the membrane as a helical span at residues 117–138 (LWLALDYVVSNASVMNLLIISF). The Cytoplasmic portion of the chain corresponds to 139-158 (DRYFCVTKPLTYPARRTTKM). The helical transmembrane segment at 159–181 (AGLMIAAAWILSFILWAPAILFW) threads the bilayer. The Extracellular portion of the chain corresponds to 182-203 (QFIVGKRTVHERECYIQFLSNP). Residues 204 to 226 (AVTFGTAIAAFYLPVVIMTVLYI) traverse the membrane as a helical segment. Over 227–412 (HISLASRSRV…AAREKKVTRT (186 aa)) the chain is Cytoplasmic. Basic residues predominate over residues 236–250 (VRRHKPESRKERKGK). Positions 236-343 (VRRHKPESRK…HPRVNPTSKW (108 aa)) are disordered. Residues 270–285 (RAVEVKEEVRNGKVDD) are compositionally biased toward basic and acidic residues. Composition is skewed to polar residues over residues 287 to 296 (PSAQTEATGQ) and 304 to 314 (NESSTVSMTQT). The chain crosses the membrane as a helical span at residues 413–433 (IFAILLAFILTWTPYNVMVLI). At 434-447 (NTFCETCVPETVWS) the chain is on the extracellular side. The helical transmembrane segment at 448–467 (IGYWLCYVNSTINPACYALC) threads the bilayer. Residues 468 to 490 (NATFKKTFKHLLMCQYRNIGTAR) are Cytoplasmic-facing.

The protein belongs to the G-protein coupled receptor 1 family. Muscarinic acetylcholine receptor subfamily. CHRM4 sub-subfamily. As to expression, expressed in heart and brain.

It localises to the cell membrane. It is found in the postsynaptic cell membrane. The muscarinic acetylcholine receptor mediates various cellular responses, including inhibition of adenylate cyclase, breakdown of phosphoinositides and modulation of potassium channels through the action of G proteins. Primary transducing effect is inhibition of adenylate cyclase. May couple to multiple functional responses in cell lines. This Gallus gallus (Chicken) protein is Muscarinic acetylcholine receptor M4 (CHRM4).